The primary structure comprises 481 residues: MAVANQPRTLAEKVWSDHVVVSGSGEGAAREPDLIYIDLHLVHEVTSPQAFDGLRLAGRPVRRPDLTIATEDHNVPTVDIDKPIADPVSRTQVETLRRNCEEFGIRLHPMGDVEQGIVHIIGPQLGLTQPGTTVVCGDSHTSTHGAFGALAMGIGTSEVEHVLATQTLPLRPFKTMAVNVDGELPPGVSAKDVILAVIAKIGTGGGQGHVIEYRGSAIESLSMEGRMTICNMSIEAGARAGMIAPDETTFEFLKGRPHAPQGADWDAAVEAWKLLRTDEGAQFDTEVYIDAASLSPFVTWGTNPGQGVPLSDSVPDPEMIFDEGERSAVEKALAYMDLRPGTPMREIPVDAVFVGSCTNGRIEDLRVVADVLRGRTVADDVRMLVVPGSMRVRAQAEAEGLGEIFTAAGAEWRQAGCSMCLGMNPDQLAPGERCASTSNRNFEGRQGKGGRTHLVSPAVAAATAVRGTLSSPADLTAEPTR.

Residues cysteine 357, cysteine 417, and cysteine 420 each coordinate [4Fe-4S] cluster.

The protein belongs to the aconitase/IPM isomerase family. LeuC type 1 subfamily. As to quaternary structure, heterodimer of LeuC and LeuD. The cofactor is [4Fe-4S] cluster.

The enzyme catalyses (2R,3S)-3-isopropylmalate = (2S)-2-isopropylmalate. Its pathway is amino-acid biosynthesis; L-leucine biosynthesis; L-leucine from 3-methyl-2-oxobutanoate: step 2/4. Its function is as follows. Catalyzes the isomerization between 2-isopropylmalate and 3-isopropylmalate, via the formation of 2-isopropylmaleate. The chain is 3-isopropylmalate dehydratase large subunit from Mycolicibacterium gilvum (strain PYR-GCK) (Mycobacterium gilvum (strain PYR-GCK)).